Reading from the N-terminus, the 979-residue chain is Pro-apoptotic serine protease NMA111 (979 aa).

A disordered region spans residues 1 to 20 (MTIMNEGKKRSHSSSSDDHL). Residues 65 to 255 (VVSIHFAQVA…LPLDRILRAL (191 aa)) are serine protease. Active-site charge relay system residues include His-103, Asp-134, and Ser-217. PDZ domains are found at residues 273-361 (WLLK…RGGT) and 750-836 (SILH…VRDG).

It belongs to the peptidase S1C family.

The protein localises to the nucleus. Functionally, nuclear serine protease which mediates apoptosis. This is Pro-apoptotic serine protease NMA111 (NMA111) from Candida glabrata (strain ATCC 2001 / BCRC 20586 / JCM 3761 / NBRC 0622 / NRRL Y-65 / CBS 138) (Yeast).